The primary structure comprises 549 residues: Zinc finger protein 266 (549 aa).

Residues 1-42 (MLENYKNLATVGYQLFKPSLISWLEQEESRTVQRGDFQASEW) enclose the KRAB domain. A C2H2-type 1; degenerate zinc finger spans residues 156-178 (FDCSDSGKSFINHSHLQGHLRTH). The C2H2-type 2; degenerate zinc-finger motif lies at 184 to 206 (HEWKECGRGFIHSTDLAVRIQTH). C2H2-type zinc fingers lie at residues 212–234 (YKCKECGKGFRYSAYLNIHMGTH), 240–262 (YECKECGKAFTRSCQLTQHRKTH), 268–290 (YKCKDCGRAFTVSSCLSQHMKIH), 296–318 (YECKECGIAFTRSSQLTEHLKTH), 324–346 (FECKICGKSFRNSSCLSDHFRIH), 352–374 (YKCKDCGKAFTQNSDLTKHARTH), 380–402 (YECKECGKAFARSSRLSEHTRTH), 408–430 (FECVKCGKAFAISSNLSGHLRIH), 436–458 (FECLECGKAFTHSSSLNNHMRTH), 464–486 (FTCMECGKAFKFPTCVNLHMRIH), 492–514 (YKCKQCGKSFSYSNSFQLHERTH), and 520–542 (YECKECGKAFSSSSSFRNHERRH). Residues 530–549 (SSSSSFRNHERRHADERLSA) form a disordered region.

It belongs to the krueppel C2H2-type zinc-finger protein family.

It is found in the nucleus. In terms of biological role, may be involved in transcriptional regulation. This Homo sapiens (Human) protein is Zinc finger protein 266 (ZNF266).